Consider the following 3587-residue polypeptide: Surfactin synthase subunit 1 (3587 aa).

Carrier domains follow at residues 971–1046 (APRN…DHRE), 2010–2085 (APRN…ASAE), and 3038–3112 (APTT…ERAE). 3 positions are modified to O-(pantetheine 4'-phosphoryl)serine: serine 1006, serine 2045, and serine 3073.

Belongs to the ATP-dependent AMP-binding enzyme family. Pantetheine 4'-phosphate serves as cofactor.

It functions in the pathway antibiotic biosynthesis; surfactin biosynthesis. In terms of biological role, this protein is a multifunctional enzyme able to activate and polymerize the amino acids Leu, Glu, Asp and Val. Activation sites for these AA consist of individual domains. This chain is Surfactin synthase subunit 1 (srfAA), found in Bacillus subtilis (strain 168).